The primary structure comprises 443 residues: MEEDSLEDSNLPPKVWHSEMTVSVTGEPPSTVEEEGIPKETDIEIIPEIPETLEPLSLPDVLRISAVLEDTTDQLSILNYIMPVQYEGRQSICVKSREMNLEGTNLDKLPMASTITKIPSPLITEEGPNLPEIRHRGRFAVEFNKMQDLVFKKPTRQTIMTTETLKKIQIDRQFFSDVIADTIKELQDSATYNSLLQALSKERENKMHFYDIIAREEKGRKQIISLQKQLINVKKEWQFEVQSQNEYIANLKDQLQEMKAKSNLENRYMKTNTELQIAQTQKKCNRTEELLVEEIEKLRMKTEEEARTHTEIEMFLRKEQQKLEERLEFWMEKYDKDTEMKQNELNALKATKASDLAHLQDLAKMIREYEQVIIEDRIEKERSKKKVKQDLLELKSVIKLQAWWRGTMIRREIGGFKMPKDKVDSKDSKGKGKGKDKRRGKKK.

Disordered stretches follow at residues 1-34 (MEED…TVEE) and 415-443 (GFKM…GKKK). One can recognise an IQ domain in the interval 393-422 (ELKSVIKLQAWWRGTMIRREIGGFKMPKDK). Residues 415-430 (GFKMPKDKVDSKDSKG) show a composition bias toward basic and acidic residues. The span at 431–443 (KGKGKDKRRGKKK) shows a compositional bias: basic residues.

Belongs to the DRC9 family. As to quaternary structure, component of the nexin-dynein regulatory complex (N-DRC). Interacts (via IQ domain) with CALM when calcium levels are low. Does not interact with CALM in the presence of Ca(2+). Interacts with the HSP70 proteins HSPA1L and HSPA8. May form a complex with CAMK4 and HSP70.

It is found in the cytoplasm. It localises to the cell projection. Its subcellular location is the cilium. The protein resides in the flagellum. The protein localises to the cytoskeleton. It is found in the flagellum axoneme. Functionally, component of the nexin-dynein regulatory complex (N-DRC), a key regulator of ciliary/flagellar motility which maintains the alignment and integrity of the distal axoneme and regulates microtubule sliding in motile axonemes. Binds calmodulin when cellular Ca(2+) levels are low and thereby contributes to the regulation of calcium and calmodulin-dependent protein kinase IV (CAMK4) activity; contributes to the regulation of CAMK4 signaling cascades. Required for normal axoneme assembly in sperm flagella, normal sperm tail formation and for male fertility. The sequence is that of Dynein regulatory complex protein 9 (IQCG) from Homo sapiens (Human).